Reading from the N-terminus, the 327-residue chain is Cobalamin biosynthesis protein CobD (327 aa).

The next 4 membrane-spanning stretches (helical) occupy residues 61 to 78, 80 to 102, 160 to 182, and 300 to 322; these read MWLT…GLVI, SILP…ILLA, GIVA…YKLI, and AALV…ASLV.

It belongs to the CobD/CbiB family.

It is found in the cell membrane. The protein operates within cofactor biosynthesis; adenosylcobalamin biosynthesis. Converts cobyric acid to cobinamide by the addition of aminopropanol on the F carboxylic group. The protein is Cobalamin biosynthesis protein CobD of Brucella suis biovar 1 (strain 1330).